We begin with the raw amino-acid sequence, 39 residues long: MQVNPNPNKLSVELNRTSLYLGLLLVFVLGILFSSYFFN.

A helical transmembrane segment spans residues S18–F38.

The protein belongs to the PsbL family. As to quaternary structure, PSII is composed of 1 copy each of membrane proteins PsbA, PsbB, PsbC, PsbD, PsbE, PsbF, PsbH, PsbI, PsbJ, PsbK, PsbL, PsbM, PsbT, PsbX, PsbY, Psb30/Ycf12, peripheral proteins PsbO, CyanoQ (PsbQ), PsbU, PsbV and a large number of cofactors. It forms dimeric complexes.

Its subcellular location is the cellular thylakoid membrane. One of the components of the core complex of photosystem II (PSII). PSII is a light-driven water:plastoquinone oxidoreductase that uses light energy to abstract electrons from H(2)O, generating O(2) and a proton gradient subsequently used for ATP formation. It consists of a core antenna complex that captures photons, and an electron transfer chain that converts photonic excitation into a charge separation. This subunit is found at the monomer-monomer interface and is required for correct PSII assembly and/or dimerization. This is Photosystem II reaction center protein L from Prochlorococcus marinus (strain SARG / CCMP1375 / SS120).